The primary structure comprises 215 residues: Thiamine-phosphate synthase (215 aa).

4-amino-2-methyl-5-(diphosphooxymethyl)pyrimidine contacts are provided by residues 42-46 and Asp-77; that span reads QYREK. The Mg(2+) site is built by Asp-78 and Asp-97. Ser-116 serves as a coordination point for 4-amino-2-methyl-5-(diphosphooxymethyl)pyrimidine. A 2-[(2R,5Z)-2-carboxy-4-methylthiazol-5(2H)-ylidene]ethyl phosphate-binding site is contributed by 143–145; the sequence is TKS. Lys-146 is a binding site for 4-amino-2-methyl-5-(diphosphooxymethyl)pyrimidine. Residues Gly-174 and 194-195 contribute to the 2-[(2R,5Z)-2-carboxy-4-methylthiazol-5(2H)-ylidene]ethyl phosphate site; that span reads IS.

The protein belongs to the thiamine-phosphate synthase family. Mg(2+) serves as cofactor.

It catalyses the reaction 2-[(2R,5Z)-2-carboxy-4-methylthiazol-5(2H)-ylidene]ethyl phosphate + 4-amino-2-methyl-5-(diphosphooxymethyl)pyrimidine + 2 H(+) = thiamine phosphate + CO2 + diphosphate. The enzyme catalyses 2-(2-carboxy-4-methylthiazol-5-yl)ethyl phosphate + 4-amino-2-methyl-5-(diphosphooxymethyl)pyrimidine + 2 H(+) = thiamine phosphate + CO2 + diphosphate. The catalysed reaction is 4-methyl-5-(2-phosphooxyethyl)-thiazole + 4-amino-2-methyl-5-(diphosphooxymethyl)pyrimidine + H(+) = thiamine phosphate + diphosphate. The protein operates within cofactor biosynthesis; thiamine diphosphate biosynthesis; thiamine phosphate from 4-amino-2-methyl-5-diphosphomethylpyrimidine and 4-methyl-5-(2-phosphoethyl)-thiazole: step 1/1. Condenses 4-methyl-5-(beta-hydroxyethyl)thiazole monophosphate (THZ-P) and 2-methyl-4-amino-5-hydroxymethyl pyrimidine pyrophosphate (HMP-PP) to form thiamine monophosphate (TMP). The chain is Thiamine-phosphate synthase from Limosilactobacillus reuteri (strain DSM 20016) (Lactobacillus reuteri).